We begin with the raw amino-acid sequence, 354 residues long: tRNA-specific 2-thiouridylase MnmA (354 aa).

ATP is bound by residues 7–14 (AMSGGVDS) and M33. The Nucleophile role is filled by C94. C94 and C192 form a disulfide bridge. Residue G118 participates in ATP binding. Positions 141–143 (KDQ) are interaction with tRNA. The active-site Cysteine persulfide intermediate is C192. An interaction with tRNA region spans residues 296 to 297 (RY).

Belongs to the MnmA/TRMU family.

The protein resides in the cytoplasm. It carries out the reaction S-sulfanyl-L-cysteinyl-[protein] + uridine(34) in tRNA + AH2 + ATP = 2-thiouridine(34) in tRNA + L-cysteinyl-[protein] + A + AMP + diphosphate + H(+). Its function is as follows. Catalyzes the 2-thiolation of uridine at the wobble position (U34) of tRNA, leading to the formation of s(2)U34. This chain is tRNA-specific 2-thiouridylase MnmA, found in Trichlorobacter lovleyi (strain ATCC BAA-1151 / DSM 17278 / SZ) (Geobacter lovleyi).